The following is a 226-amino-acid chain: NifU-like protein 1, chloroplastic (226 aa).

Residues 1–76 (MQTTTVPMAA…PVTAVQLPLT (76 aa)) constitute a chloroplast transit peptide.

This sequence belongs to the NifU family. Homodimer; disulfide-linked.

The protein resides in the plastid. The protein localises to the chloroplast stroma. In terms of biological role, molecular scaffold for [Fe-S] cluster assembly of chloroplastic iron-sulfur proteins. In Oryza sativa subsp. japonica (Rice), this protein is NifU-like protein 1, chloroplastic (NIFU1).